Consider the following 355-residue polypeptide: MGGKTFMLMAGGTGGHIFPALAVADSLRARGHHVIWLGSKDSMEERIVPQYDILLETLAIKGVRGNGIKRKLMLPFTLYQTVREAQQIIRKHRVECVIGFGGFVTFPGGLAAKLLGVPIVIHEQNAVAGLSNRHLSRWAKRVLYAFPKAFSHEGGLVGNPVRADISNLPVPAERFQGREGRLKILVVGGSLGADVLNKTVPQALALLPDNARPQMYHQSGRGKLGSLQADYDALGVQAECVEFITDMVSAYRDADLVICRAGALTIAELTAAGLGALLVPYPHAVDDHQTANARFMVQAEAGLLLPQTQLTAEKLAEILGGLNREKCLKWAENARTLALPHSADDVAEAAIACAA.

Residues 13 to 15, asparagine 125, arginine 162, serine 190, isoleucine 244, and glutamine 289 each bind UDP-N-acetyl-alpha-D-glucosamine; that span reads TGG.

The protein belongs to the glycosyltransferase 28 family. MurG subfamily.

The protein resides in the cell inner membrane. The enzyme catalyses di-trans,octa-cis-undecaprenyl diphospho-N-acetyl-alpha-D-muramoyl-L-alanyl-D-glutamyl-meso-2,6-diaminopimeloyl-D-alanyl-D-alanine + UDP-N-acetyl-alpha-D-glucosamine = di-trans,octa-cis-undecaprenyl diphospho-[N-acetyl-alpha-D-glucosaminyl-(1-&gt;4)]-N-acetyl-alpha-D-muramoyl-L-alanyl-D-glutamyl-meso-2,6-diaminopimeloyl-D-alanyl-D-alanine + UDP + H(+). It participates in cell wall biogenesis; peptidoglycan biosynthesis. Cell wall formation. Catalyzes the transfer of a GlcNAc subunit on undecaprenyl-pyrophosphoryl-MurNAc-pentapeptide (lipid intermediate I) to form undecaprenyl-pyrophosphoryl-MurNAc-(pentapeptide)GlcNAc (lipid intermediate II). This Neisseria meningitidis serogroup A / serotype 4A (strain DSM 15465 / Z2491) protein is UDP-N-acetylglucosamine--N-acetylmuramyl-(pentapeptide) pyrophosphoryl-undecaprenol N-acetylglucosamine transferase.